The sequence spans 209 residues: Ribosome maturation factor RimM (209 aa).

The 76-residue stretch at E103–M178 folds into the PRC barrel domain. The interval P184–R209 is disordered. A compositionally biased stretch (basic and acidic residues) spans K187–R209.

This sequence belongs to the RimM family. As to quaternary structure, binds ribosomal protein uS19.

Its subcellular location is the cytoplasm. In terms of biological role, an accessory protein needed during the final step in the assembly of 30S ribosomal subunit, possibly for assembly of the head region. Essential for efficient processing of 16S rRNA. May be needed both before and after RbfA during the maturation of 16S rRNA. It has affinity for free ribosomal 30S subunits but not for 70S ribosomes. This chain is Ribosome maturation factor RimM, found in Koribacter versatilis (strain Ellin345).